We begin with the raw amino-acid sequence, 91 residues long: UPF0213 protein NGO_1598 (91 aa).

Residues 4–83 (SNWSVYLILC…AAQKRQLWEQ (80 aa)) form the GIY-YIG domain.

This sequence belongs to the UPF0213 family.

The polypeptide is UPF0213 protein NGO_1598 (Neisseria gonorrhoeae (strain ATCC 700825 / FA 1090)).